The chain runs to 266 residues: Signal peptidase I (266 aa).

The Cytoplasmic portion of the chain corresponds to 1–20 (MQTDNTKSNTNKTAKQEWWS). A helical membrane pass occupies residues 21–41 (CAFVICIALLIRILIMEPFTV). Residues 42 to 266 (PTGSMKATIL…IFRNLYNTDE (225 aa)) are Periplasmic-facing. Active-site residues include Ser-45 and Lys-108.

This sequence belongs to the peptidase S26 family.

It is found in the cell inner membrane. It catalyses the reaction Cleavage of hydrophobic, N-terminal signal or leader sequences from secreted and periplasmic proteins.. This Rickettsia akari (strain Hartford) protein is Signal peptidase I (lepB).